The following is a 120-amino-acid chain: UPF0344 protein lin2366 (120 aa).

Helical transmembrane passes span 3-23 (GYVH…ALLI), 33-53 (MLQM…IMMV), 62-82 (ILAI…EMLL), and 92-112 (GMFL…GFYL).

Belongs to the UPF0344 family.

It is found in the cell membrane. The polypeptide is UPF0344 protein lin2366 (Listeria innocua serovar 6a (strain ATCC BAA-680 / CLIP 11262)).